Reading from the N-terminus, the 473-residue chain is 23S rRNA (uracil(1939)-C(5))-methyltransferase RlmD (473 aa).

The disordered stretch occupies residues 6–27 (KPSKGKNKSNVKGRVRGAGSGE). Over residues 8–20 (SKGKNKSNVKGRV) the composition is skewed to basic residues. One can recognise a TRAM domain in the interval 42–99 (DDINAANEAVTIDGMDWQGQGVARGDTLYFVDGALPGETVEIKALSSNKQIVNAKVTK). [4Fe-4S] cluster is bound by residues cysteine 112, cysteine 118, cysteine 121, and cysteine 199. S-adenosyl-L-methionine-binding residues include glutamine 304, phenylalanine 333, asparagine 338, glutamate 354, aspartate 381, and aspartate 402. Cysteine 428 (nucleophile) is an active-site residue.

The protein belongs to the class I-like SAM-binding methyltransferase superfamily. RNA M5U methyltransferase family. RlmD subfamily.

It carries out the reaction uridine(1939) in 23S rRNA + S-adenosyl-L-methionine = 5-methyluridine(1939) in 23S rRNA + S-adenosyl-L-homocysteine + H(+). In terms of biological role, catalyzes the formation of 5-methyl-uridine at position 1939 (m5U1939) in 23S rRNA. This chain is 23S rRNA (uracil(1939)-C(5))-methyltransferase RlmD, found in Alteromonas naphthalenivorans.